An 830-amino-acid chain; its full sequence is uncharacterized protein (830 aa).

A compositionally biased stretch (basic and acidic residues) spans 1–12 (MEKASKNKESGV). The disordered stretch occupies residues 1 to 61 (MEKASKNKES…SIKSKNKKKT (61 aa)). Over residues 15–25 (ANNSFLQNFGV) the composition is skewed to polar residues. A Helicase ATP-binding domain is found at 249–433 (TVSKSSASGG…YSLVKFLHIN (185 aa)). 262-269 (DDMGLGKT) contributes to the ATP binding site. Positions 384–387 (DEAH) match the DEAH box motif. Residues 662 to 816 (EEDDTVRGLR…KSVFTSKKLT (155 aa)) enclose the Helicase C-terminal domain. The residue at position 712 (Ser-712) is a Phosphoserine.

It belongs to the SNF2/RAD54 helicase family.

It localises to the nucleus. This is an uncharacterized protein from Schizosaccharomyces pombe (strain 972 / ATCC 24843) (Fission yeast).